The chain runs to 187 residues: Elongation factor P (187 aa).

This sequence belongs to the elongation factor P family.

The protein localises to the cytoplasm. It functions in the pathway protein biosynthesis; polypeptide chain elongation. Involved in peptide bond synthesis. Stimulates efficient translation and peptide-bond synthesis on native or reconstituted 70S ribosomes in vitro. Probably functions indirectly by altering the affinity of the ribosome for aminoacyl-tRNA, thus increasing their reactivity as acceptors for peptidyl transferase. This is Elongation factor P from Desulfotalea psychrophila (strain LSv54 / DSM 12343).